The following is a 240-amino-acid chain: 1-(5-phosphoribosyl)-5-[(5-phosphoribosylamino)methylideneamino] imidazole-4-carboxamide isomerase (240 aa).

Asp8 (proton acceptor) is an active-site residue. Asp129 acts as the Proton donor in catalysis.

The protein belongs to the HisA/HisF family.

The protein resides in the cytoplasm. It carries out the reaction 1-(5-phospho-beta-D-ribosyl)-5-[(5-phospho-beta-D-ribosylamino)methylideneamino]imidazole-4-carboxamide = 5-[(5-phospho-1-deoxy-D-ribulos-1-ylimino)methylamino]-1-(5-phospho-beta-D-ribosyl)imidazole-4-carboxamide. It participates in amino-acid biosynthesis; L-histidine biosynthesis; L-histidine from 5-phospho-alpha-D-ribose 1-diphosphate: step 4/9. The chain is 1-(5-phosphoribosyl)-5-[(5-phosphoribosylamino)methylideneamino] imidazole-4-carboxamide isomerase from Listeria monocytogenes serotype 4b (strain CLIP80459).